The following is a 33-amino-acid chain: Brevinin-2 (33 aa).

A disulfide bond links Cys27 and Cys33.

This sequence belongs to the frog skin active peptide (FSAP) family. Brevinin subfamily. In terms of tissue distribution, expressed by the skin glands.

Its subcellular location is the secreted. Functionally, shows antibacterial activity against representative Gram-negative and Gram-positive bacterial species, and a very high hemolytic activity. This is Brevinin-2 from Pelophylax porosus brevipodus (Nagoya Daruma pond frog).